The primary structure comprises 639 residues: Centromere protein T (639 aa).

Disordered stretches follow at residues 1–64, 266–294, 307–451, 458–477, and 494–534; these read MDGR…RPNA, QLSD…GLVS, SEKD…ERGT, AAEE…ESEE, and QPVL…TREP. The span at 12 to 23 shows a compositional bias: low complexity; that stretch reads RAAPTPRVAVRS. The interval 80–500 is flexible stalk domain; the sequence is IIQNQPQVSP…YRPQPVLSPP (421 aa). Polar residues predominate over residues 267 to 281; that stretch reads LSDSKTSAQRSNTSY. Basic and acidic residues-rich tracts occupy residues 307-319, 329-338, 356-371, and 432-449; these read SEKD…EHVD, QGEEEQDHSQ, TEHH…SEKK, and PGAK…EIER. Over residues 458–469 the composition is skewed to acidic residues; sequence AAEEEATDDESD.

The protein belongs to the CENP-T/CNN1 family. Component of the CENPA-CAD complex, composed of CENPI, CENPK, CENPL, CENPO, CENPP, CENPQ, CENPR and CENPS. The CENPA-CAD complex is probably recruited on centromeres by the CENPA-NAC complex, at least composed of CENPA, CENPC, CENPH, CENPM, CENPN, CENPT and CENPU. Identified in a centromeric complex containing histones H2A, H2B, H3 and H4, and at least CENPA, CENPB, CENPC, CENPT, CENPN, HJURP, SUPT16H, SSRP1 and RSF1. Interacts (via N-terminus) with the NDC80 complex. Heterodimer with CENPW; this dimer coassembles with CENPS-CENPX heterodimers at centromeres to form the tetrameric CENP-T-W-S-X complex.

The protein resides in the nucleus. It localises to the chromosome. Its subcellular location is the centromere. It is found in the kinetochore. Its function is as follows. Component of the CENPA-NAC (nucleosome-associated) complex, a complex that plays a central role in assembly of kinetochore proteins, mitotic progression and chromosome segregation. The CENPA-NAC complex recruits the CENPA-CAD (nucleosome distal) complex and may be involved in incorporation of newly synthesized CENPA into centromeres. Part of a nucleosome-associated complex that binds specifically to histone H3-containing nucleosomes at the centromere, as opposed to nucleosomes containing CENPA. Component of the heterotetrameric CENP-T-W-S-X complex that binds and supercoils DNA, and plays an important role in kinetochore assembly. CENPT has a fundamental role in kinetochore assembly and function. It is one of the inner kinetochore proteins, with most further proteins binding downstream. Required for normal chromosome organization and normal progress through mitosis. In Gallus gallus (Chicken), this protein is Centromere protein T (CENPT).